Consider the following 449-residue polypeptide: Transport protein ComB (449 aa).

Over 1–20 (MKPEFLESAEFYNRRYHNFS) the chain is Cytoplasmic. The chain crosses the membrane as a helical span at residues 21–41 (SSVIVPMALLLVFLLGFATVA). Topologically, residues 42–449 (EKEMSLSTRA…YYLDQFLNKE (408 aa)) are extracellular.

The protein belongs to the membrane fusion protein (MFP) (TC 8.A.1) family.

The protein resides in the cell membrane. Functionally, required for induction of competence. The sequence is that of Transport protein ComB (comB) from Streptococcus pneumoniae (strain ATCC BAA-255 / R6).